The chain runs to 104 residues: Disrupted in renal carcinoma protein 1 (104 aa).

The tract at residues 1–23 (MPEAHMQPAKLQTSLPTTDHGSK) is disordered. Over residues 10 to 19 (KLQTSLPTTD) the composition is skewed to polar residues.

Expressed at low steady-state level in adult placenta, testis, ovary, prostate, fetal kidney, spleen and skeletal muscle.

This Homo sapiens (Human) protein is Disrupted in renal carcinoma protein 1 (DIRC1).